The chain runs to 344 residues: UDP-N-acetylenolpyruvoylglucosamine reductase (344 aa).

The 171-residue stretch at 17–187 folds into the FAD-binding PCMH-type domain; the sequence is VDYACSELIS…TGVGIKLAKK (171 aa). R163 is a catalytic residue. S233 acts as the Proton donor in catalysis. E329 is a catalytic residue.

This sequence belongs to the MurB family. FAD is required as a cofactor.

The protein resides in the cytoplasm. It catalyses the reaction UDP-N-acetyl-alpha-D-muramate + NADP(+) = UDP-N-acetyl-3-O-(1-carboxyvinyl)-alpha-D-glucosamine + NADPH + H(+). The protein operates within cell wall biogenesis; peptidoglycan biosynthesis. In terms of biological role, cell wall formation. This Shewanella sediminis (strain HAW-EB3) protein is UDP-N-acetylenolpyruvoylglucosamine reductase.